We begin with the raw amino-acid sequence, 126 residues long: Urease subunit beta (126 aa).

It belongs to the urease beta subunit family. In terms of assembly, heterotrimer of UreA (gamma), UreB (beta) and UreC (alpha) subunits. Three heterotrimers associate to form the active enzyme.

It localises to the cytoplasm. It catalyses the reaction urea + 2 H2O + H(+) = hydrogencarbonate + 2 NH4(+). The protein operates within nitrogen metabolism; urea degradation; CO(2) and NH(3) from urea (urease route): step 1/1. In Gloeothece citriformis (strain PCC 7424) (Cyanothece sp. (strain PCC 7424)), this protein is Urease subunit beta.